We begin with the raw amino-acid sequence, 266 residues long: GTP cyclohydrolase FolE2 (266 aa).

This sequence belongs to the GTP cyclohydrolase IV family.

It catalyses the reaction GTP + H2O = 7,8-dihydroneopterin 3'-triphosphate + formate + H(+). The protein operates within cofactor biosynthesis; 7,8-dihydroneopterin triphosphate biosynthesis; 7,8-dihydroneopterin triphosphate from GTP: step 1/1. Its function is as follows. Converts GTP to 7,8-dihydroneopterin triphosphate. The polypeptide is GTP cyclohydrolase FolE2 (Methylobacillus flagellatus (strain ATCC 51484 / DSM 6875 / VKM B-1610 / KT)).